Consider the following 263-residue polypeptide: L-aspartate dehydrogenase (263 aa).

2 residues coordinate NAD(+): A120 and N186. Residue H216 is part of the active site.

The protein belongs to the L-aspartate dehydrogenase family.

The enzyme catalyses L-aspartate + NADP(+) + H2O = oxaloacetate + NH4(+) + NADPH + H(+). It carries out the reaction L-aspartate + NAD(+) + H2O = oxaloacetate + NH4(+) + NADH + H(+). It functions in the pathway cofactor biosynthesis; NAD(+) biosynthesis; iminoaspartate from L-aspartate (dehydrogenase route): step 1/1. Functionally, specifically catalyzes the NAD or NADP-dependent dehydrogenation of L-aspartate to iminoaspartate. This is L-aspartate dehydrogenase from Acinetobacter baumannii (strain AB307-0294).